The following is a 314-amino-acid chain: DNA-directed RNA polymerase subunit alpha (314 aa).

The interval 1–228 is alpha N-terminal domain (alpha-NTD); that stretch reads MIEIEKPRIE…EHLNIFVSLT (228 aa). Positions 245-314 are alpha C-terminal domain (alpha-CTD); the sequence is KEKVLEMSIE…DLGLGLRKED (70 aa).

It belongs to the RNA polymerase alpha chain family. In terms of assembly, homodimer. The RNAP catalytic core consists of 2 alpha, 1 beta, 1 beta' and 1 omega subunit. When a sigma factor is associated with the core the holoenzyme is formed, which can initiate transcription.

It catalyses the reaction RNA(n) + a ribonucleoside 5'-triphosphate = RNA(n+1) + diphosphate. In terms of biological role, DNA-dependent RNA polymerase catalyzes the transcription of DNA into RNA using the four ribonucleoside triphosphates as substrates. This chain is DNA-directed RNA polymerase subunit alpha, found in Staphylococcus epidermidis (strain ATCC 35984 / DSM 28319 / BCRC 17069 / CCUG 31568 / BM 3577 / RP62A).